We begin with the raw amino-acid sequence, 325 residues long: Lipid droplet-associated hydrolase (325 aa).

The active-site Nucleophile is the Ser139. Residues Asp271 and His300 each act as charge relay system in the active site.

It belongs to the AB hydrolase superfamily. LDAH family. Present in macrophage-rich areas in atherosclerotic lesions (at protein level). Expressed in monocytes and monocyte-derived macrophages (at protein level).

The protein resides in the lipid droplet. It is found in the endoplasmic reticulum. The enzyme catalyses a cholesterol ester + H2O = cholesterol + a fatty acid + H(+). In terms of biological role, probable serine lipid hydrolase associated with lipid droplets. Has low cholesterol esterase activity. Appears to lack triglyceride lipase activity. Involved in cholesterol and triglyceride homeostasis; has opposing effects, stimulating cellular triglyceride accumulation and cellular cholesterol release. Acts antagonistically with PNPLA2/ATGL in regulation of cellular lipid stores. May regulate triglyceride accumulation indirectly through stimulation of PNPLA2/ATGL ubiquitination and proteasomal degradation. Promotes microtubule-dependent lipid droplet fusion. Highly expressed in macrophage-rich areas in atherosclerotic lesions, suggesting that it could promote cholesterol ester turnover in macrophages. This Homo sapiens (Human) protein is Lipid droplet-associated hydrolase.